A 322-amino-acid polypeptide reads, in one-letter code: MYLPTLAASASLLVGVAHGYASPGACSGACNIHDPALIRRESDGKYFRFSTGNKISYASASSIEGPWTAIGSVLPGGSSIDLDGNDDLWAPDVQLVNGVYYVLYSVSTFGSQNSAIGLATSDTMDLNTWTDHGSTGIRSDSSKPYNAIDGNLFQDDSGTWYMNFGSFWNDIYQAQMKSPPTAVASSSYQIAYQPAGEHAVEGAYLYKYGNYYYLFFSEGKCCGYDSSRPATGEEYKIKVCRSTTATGNFVDANGVSCTSGGGTIVLESHDNVYGPGGQGVFTDPTLGPVLYYHYVDTTIGYADSQKLFGWNVLDFSSGWPVV.

Positions 1 to 19 (MYLPTLAASASLLVGVAHG) are cleaved as a signal peptide. Residue D34 is the Proton acceptor of the active site. E201 acts as the Proton donor in catalysis.

The protein belongs to the glycosyl hydrolase 43 family.

Its subcellular location is the secreted. The enzyme catalyses Endohydrolysis of (1-&gt;5)-alpha-arabinofuranosidic linkages in (1-&gt;5)-arabinans.. It participates in glycan metabolism; L-arabinan degradation. Its function is as follows. Endo-1,5-alpha-L-arabinanase involved in degradation of pectin. Its preferred substrate is linear 1,5-alpha-L-arabinan. This is Probable arabinan endo-1,5-alpha-L-arabinosidase A (abnA) from Emericella nidulans (strain FGSC A4 / ATCC 38163 / CBS 112.46 / NRRL 194 / M139) (Aspergillus nidulans).